The primary structure comprises 357 residues: UDP-N-acetylglucosamine--N-acetylmuramyl-(pentapeptide) pyrophosphoryl-undecaprenol N-acetylglucosamine transferase (357 aa).

UDP-N-acetyl-alpha-D-glucosamine is bound by residues 13-15 (TGG), asparagine 125, arginine 161, serine 189, isoleucine 243, and glutamine 288.

Belongs to the glycosyltransferase 28 family. MurG subfamily.

It is found in the cell inner membrane. The catalysed reaction is di-trans,octa-cis-undecaprenyl diphospho-N-acetyl-alpha-D-muramoyl-L-alanyl-D-glutamyl-meso-2,6-diaminopimeloyl-D-alanyl-D-alanine + UDP-N-acetyl-alpha-D-glucosamine = di-trans,octa-cis-undecaprenyl diphospho-[N-acetyl-alpha-D-glucosaminyl-(1-&gt;4)]-N-acetyl-alpha-D-muramoyl-L-alanyl-D-glutamyl-meso-2,6-diaminopimeloyl-D-alanyl-D-alanine + UDP + H(+). It participates in cell wall biogenesis; peptidoglycan biosynthesis. In terms of biological role, cell wall formation. Catalyzes the transfer of a GlcNAc subunit on undecaprenyl-pyrophosphoryl-MurNAc-pentapeptide (lipid intermediate I) to form undecaprenyl-pyrophosphoryl-MurNAc-(pentapeptide)GlcNAc (lipid intermediate II). The sequence is that of UDP-N-acetylglucosamine--N-acetylmuramyl-(pentapeptide) pyrophosphoryl-undecaprenol N-acetylglucosamine transferase from Polynucleobacter asymbioticus (strain DSM 18221 / CIP 109841 / QLW-P1DMWA-1) (Polynucleobacter necessarius subsp. asymbioticus).